Here is a 231-residue protein sequence, read N- to C-terminus: Small ribosomal subunit protein bS18c (231 aa).

Disordered stretches follow at residues 1–31 (MEKS…PIES) and 95–231 (QKEE…TRKK). Positions 9 to 26 (IKKKRPFRKKKRSFRKRR) are enriched in basic residues. Composition is skewed to basic and acidic residues over residues 95–151 (QKEE…EFQR), 159–169 (TNEKQTNEKQT), and 212–231 (TNEK…TRKK).

Belongs to the bacterial ribosomal protein bS18 family. In terms of assembly, part of the 30S ribosomal subunit.

Its subcellular location is the plastid. The protein resides in the chloroplast. In Jasminum nudiflorum (Winter jasmine), this protein is Small ribosomal subunit protein bS18c.